The sequence spans 254 residues: Proteasome activator complex subunit 3 (254 aa).

Ala-2 bears the N-acetylalanine mark. Phosphoserine occurs at positions 17 and 24. Lys-195 is modified (N6-acetyllysine; by P300/CBP). Ser-247 carries the post-translational modification Phosphoserine; by CHEK2.

The protein belongs to the PA28 family. Homoheptamer; the stability of the heptamer is essential for the specific activation of the trypsine-like subunit and inhibition of the chymotrypsin-like and postglutamyl-preferring (PGPH) subunits of the proteasome. Interacts with p53/TP53 and MDM2. Interacts with MAP3K3. Associates with the proteasome. Interacts with CCAR2. Interacts with PSME3IP1 (via C-terminus); the interaction is direct and promotes the association of PSME3 with the 20S proteasome. Interacts with COIL; the interaction is inhibited by PSME3IP1. As to quaternary structure, (Microbial infection) Interacts with human cytomegalovirus UL27. In terms of processing, phosphorylated by MAP3K3. Phosphorylation at Ser-247 promotes its association with CCAR2. Post-translationally, acetylation at the major site Lys-195 is important for oligomerization and ability to degrade its target substrates. Deacetylated by SIRT1.

It localises to the nucleus. Its subcellular location is the cytoplasm. Its function is as follows. Subunit of the 11S REG-gamma (also called PA28-gamma) proteasome regulator, a doughnut-shaped homoheptamer which associates with the proteasome. 11S REG-gamma activates the trypsin-like catalytic subunit of the proteasome but inhibits the chymotrypsin-like and postglutamyl-preferring (PGPH) subunits. Facilitates the MDM2-p53/TP53 interaction which promotes ubiquitination- and MDM2-dependent proteasomal degradation of p53/TP53, limiting its accumulation and resulting in inhibited apoptosis after DNA damage. May also be involved in cell cycle regulation. Mediates CCAR2 and CHEK2-dependent SIRT1 inhibition. In Homo sapiens (Human), this protein is Proteasome activator complex subunit 3 (PSME3).